Reading from the N-terminus, the 406-residue chain is Dematin (406 aa).

Disordered regions lie at residues 1–30 and 78–333; these read MERLQKQPLTSPGSVSSSRDSSVPGSPSSI and LPRS…DRGN. Residues 11-29 show a composition bias toward low complexity; the sequence is SPGSVSSSRDSSVPGSPSS. Phosphoserine is present on residues serine 16, serine 18, serine 26, serine 92, serine 96, serine 105, serine 110, serine 113, serine 157, and serine 227. Positions 105–114 are enriched in polar residues; the sequence is SPGTISQASA. Positions 217–228 are enriched in acidic residues; sequence EEEEEEEDDDSG. Residues 225 to 309 are interaction with RASGRF2; it reads DDSGEEMKAL…SRLQSTDFSP (85 aa). Basic and acidic residues-rich tracts occupy residues 229–243 and 253–262; these read EEMKALRERQREELS and ILKEEMEKSL. 8 positions are modified to phosphoserine: serine 270, serine 280, serine 290, serine 304, serine 316, serine 334, serine 373, and serine 384. Residues 282–323 show a composition bias toward polar residues; it reads HAGTSKSSSLPAYGRTTLSRLQSTDFSPSGSEAESPGLQNGE. Residues 338-406 enclose the HP domain; it reads VLEQKIYPYE…NELKKKASLF (69 aa). Serine 404 carries the phosphoserine; by PKA modification.

It belongs to the villin/gelsolin family. Monomeric; under reducing conditions. Self-associates. Exists under oxidizing condition as a trimer linked by disulfide bonds. Found in a complex with DMTN, F-actin and spectrin. Found in a complex with ADD2, DMTN and SLC2A1. Interacts with F-actin, ITPKB and spectrin. Interacts with SLC2A1 (via C-terminus cytoplasmic region). Interacts with RASGRF2. In terms of processing, phosphorylated. Phosphorylation at Ser-404 by PKA causes the C-terminal headpiece domain to associate with the N-terminal core domain, and leads to the inhibition of its actin bundling activity.

It is found in the cytoplasm. The protein localises to the cytosol. The protein resides in the perinuclear region. Its subcellular location is the cytoskeleton. It localises to the cell membrane. It is found in the membrane. The protein localises to the endomembrane system. The protein resides in the cell projection. Membrane-cytoskeleton-associated protein with F-actin-binding activity that induces F-actin bundles formation and stabilization. Its F-actin-bundling activity is reversibly regulated upon its phosphorylation by the cAMP-dependent protein kinase A (PKA). Binds to the erythrocyte membrane glucose transporter-1 SLC2A1/GLUT1, and hence stabilizes and attaches the spectrin-actin network to the erythrocytic plasma membrane. Plays a role in maintaining the functional integrity of PKA-activated erythrocyte shape and the membrane mechanical properties. Also plays a role as a modulator of actin dynamics in fibroblasts; acts as a negative regulator of the RhoA activation pathway. In platelets, functions as a regulator of internal calcium mobilization across the dense tubular system that affects platelet granule secretion pathways and aggregation. Also required for the formation of a diverse set of cell protrusions, such as filopodia and lamellipodia, necessary for platelet cell spreading, motility and migration. Acts as a tumor suppressor and inhibits malignant cell transformation. This chain is Dematin (DMTN), found in Bos taurus (Bovine).